The primary structure comprises 104 residues: Pyrimidine/purine nucleoside phosphorylase (104 aa).

Belongs to the nucleoside phosphorylase PpnP family.

The catalysed reaction is a purine D-ribonucleoside + phosphate = a purine nucleobase + alpha-D-ribose 1-phosphate. It carries out the reaction adenosine + phosphate = alpha-D-ribose 1-phosphate + adenine. It catalyses the reaction cytidine + phosphate = cytosine + alpha-D-ribose 1-phosphate. The enzyme catalyses guanosine + phosphate = alpha-D-ribose 1-phosphate + guanine. The catalysed reaction is inosine + phosphate = alpha-D-ribose 1-phosphate + hypoxanthine. It carries out the reaction thymidine + phosphate = 2-deoxy-alpha-D-ribose 1-phosphate + thymine. It catalyses the reaction uridine + phosphate = alpha-D-ribose 1-phosphate + uracil. The enzyme catalyses xanthosine + phosphate = alpha-D-ribose 1-phosphate + xanthine. Its function is as follows. Catalyzes the phosphorolysis of diverse nucleosides, yielding D-ribose 1-phosphate and the respective free bases. Can use uridine, adenosine, guanosine, cytidine, thymidine, inosine and xanthosine as substrates. Also catalyzes the reverse reactions. In Colwellia psychrerythraea (strain 34H / ATCC BAA-681) (Vibrio psychroerythus), this protein is Pyrimidine/purine nucleoside phosphorylase.